Reading from the N-terminus, the 924-residue chain is WSC domain-containing protein ARB_07867 (924 aa).

The first 24 residues, 1-24 (MAGILSVVHIIIIFIVRFKSSTDS), serve as a signal peptide directing secretion. In terms of domain architecture, WSC 1 spans 62-160 (TWTYLGCYTD…PGRLNLYQNT (99 aa)). Asn90 is a glycosylation site (N-linked (GlcNAc...) asparagine). Residues 166–190 (DTMTTSAPSTETGSPTTTSVPEPTQ) are disordered. Residues 169 to 189 (TTSAPSTETGSPTTTSVPEPT) show a composition bias toward low complexity. The region spanning 195–289 (GWQYSGCYQD…PSRLSVYSKG (95 aa)) is the WSC 2 domain. Asn290, Asn333, Asn387, Asn455, Asn552, Asn758, and Asn833 each carry an N-linked (GlcNAc...) asparagine glycan. The 98-residue stretch at 307–404 (GWKYQGCLQD…GNLITYYRWM (98 aa)) folds into the WSC 3 domain.

It localises to the secreted. This Arthroderma benhamiae (strain ATCC MYA-4681 / CBS 112371) (Trichophyton mentagrophytes) protein is WSC domain-containing protein ARB_07867.